The following is a 268-amino-acid chain: MTGINTHFAVALFCFFSFSLRAMSQASQMLIDCTQFDNVTRTSSYLSNRDTVLSTLRNRSSIGSYSNATAGLSPNTIYGMFLCRGDLNRTSCSDCVNATTLEIYKSCFYRKSALVISNECIVRYSNVSFFTLVEDVPSTARFSTGNSLDSPQFFSQTLLEKLDALILRASLSSSLPVPYFVDDQQHVTQLEGSYDLHAMVQCSPDLDPRNCTVCLRLAVQRLSGCCSHAQFARIFYTKCLITYEISALQPNVTSLGVTKSESLTVYII.

Residues 1–24 form the signal peptide; sequence MTGINTHFAVALFCFFSFSLRAMS. Gnk2-homologous domains follow at residues 27 to 129 and 135 to 248; these read SQML…NVSF and DVPS…ISAL.

This sequence belongs to the cysteine-rich repeat secretory protein family.

Its subcellular location is the secreted. The chain is Putative cysteine-rich repeat secretory protein 5 (CRRSP5) from Arabidopsis thaliana (Mouse-ear cress).